Reading from the N-terminus, the 153-residue chain is Protein C (153 aa).

Residues 16-42 are disordered; that stretch reads SSETLTLLSNQEPLSMQDPPLVRSSTR. Positions 18 to 29 are enriched in polar residues; the sequence is ETLTLLSNQEPL.

This chain is Protein C (P/V/C), found in Tupaia paramyxovirus (TPMV).